The sequence spans 218 residues: 3,4-dihydroxy-2-butanone 4-phosphate synthase (218 aa).

Residues 37-38 (RE), aspartate 42, 150-154 (RSGHT), and glutamate 174 contribute to the D-ribulose 5-phosphate site. Glutamate 38 contributes to the Mg(2+) binding site. Histidine 153 serves as a coordination point for Mg(2+).

The protein belongs to the DHBP synthase family. Homodimer. Requires Mg(2+) as cofactor. The cofactor is Mn(2+).

The catalysed reaction is D-ribulose 5-phosphate = (2S)-2-hydroxy-3-oxobutyl phosphate + formate + H(+). Its pathway is cofactor biosynthesis; riboflavin biosynthesis; 2-hydroxy-3-oxobutyl phosphate from D-ribulose 5-phosphate: step 1/1. Its function is as follows. Catalyzes the conversion of D-ribulose 5-phosphate to formate and 3,4-dihydroxy-2-butanone 4-phosphate. The sequence is that of 3,4-dihydroxy-2-butanone 4-phosphate synthase from Hamiltonella defensa subsp. Acyrthosiphon pisum (strain 5AT).